The sequence spans 156 residues: Ribosomal RNA large subunit methyltransferase H (156 aa).

S-adenosyl-L-methionine is bound by residues leucine 73, glycine 104, and 123 to 128 (IGPLTL).

The protein belongs to the RNA methyltransferase RlmH family. Homodimer.

It is found in the cytoplasm. It catalyses the reaction pseudouridine(1915) in 23S rRNA + S-adenosyl-L-methionine = N(3)-methylpseudouridine(1915) in 23S rRNA + S-adenosyl-L-homocysteine + H(+). In terms of biological role, specifically methylates the pseudouridine at position 1915 (m3Psi1915) in 23S rRNA. This Xanthomonas euvesicatoria pv. vesicatoria (strain 85-10) (Xanthomonas campestris pv. vesicatoria) protein is Ribosomal RNA large subunit methyltransferase H.